Consider the following 186-residue polypeptide: Ribosome-recycling factor (186 aa).

The interval 135–164 (DGMDDLKKAEKDGEIGQDESRAQSERVQKM) is disordered.

Belongs to the RRF family.

It localises to the cytoplasm. Functionally, responsible for the release of ribosomes from messenger RNA at the termination of protein biosynthesis. May increase the efficiency of translation by recycling ribosomes from one round of translation to another. In Rhizobium meliloti (strain 1021) (Ensifer meliloti), this protein is Ribosome-recycling factor.